The following is a 181-amino-acid chain: Germinal center-associated signaling and motility protein (181 aa).

Residue S102 is modified to Phosphoserine. Residues 117–128 show a composition bias toward basic and acidic residues; sequence AERHKESSRGTE. The disordered stretch occupies residues 117–181; that stretch reads AERHKESSRG…PYETHFSYPQ (65 aa). Phosphotyrosine is present on Y150.

As to quaternary structure, interacts with ACTB and MYH2; the interaction with MYH2 is increased by IL6-induced phosphorylation. Interacts (via C-terminus) with ARHGEF11 (via DH domain). Interacts with ARHGEF12. Interacts with SYK; the interaction increases after B-cell receptor stimulation, resulting in enhanced SYK autophosphorylation and activity. In terms of processing, phosphorylation on tyrosine residues can be induced by IL6. Phosphorylation is mediated by LYN. Targeted by the ubiquitin E3 ligase subunit FBXO10 to mediate its ubiquitination and degradation. In terms of tissue distribution, highly expressed in normal germinal center (GC) B-cells. Expressed in spleen and, to a lesser extent, bone marrow.

Its subcellular location is the cytoplasm. The protein localises to the cell membrane. Its function is as follows. Involved in the negative regulation of lymphocyte motility. It mediates the migration-inhibitory effects of IL6. Serves as a positive regulator of the RhoA signaling pathway. Enhancement of RhoA activation results in inhibition of lymphocyte and lymphoma cell motility by activation of its downstream effector ROCK. Is a regulator of B-cell receptor signaling, that acts through SYK kinase activation. In Mus musculus (Mouse), this protein is Germinal center-associated signaling and motility protein (Gcsam).